The chain runs to 330 residues: Beta-ketoacyl-[acyl-carrier-protein] synthase III (330 aa).

Active-site residues include C118 and H257. The interval Q258 to R262 is ACP-binding. The active site involves N287.

It belongs to the thiolase-like superfamily. FabH family. In terms of assembly, homodimer.

The protein localises to the cytoplasm. It carries out the reaction malonyl-[ACP] + acetyl-CoA + H(+) = 3-oxobutanoyl-[ACP] + CO2 + CoA. Its pathway is lipid metabolism; fatty acid biosynthesis. In terms of biological role, catalyzes the condensation reaction of fatty acid synthesis by the addition to an acyl acceptor of two carbons from malonyl-ACP. Catalyzes the first condensation reaction which initiates fatty acid synthesis and may therefore play a role in governing the total rate of fatty acid production. Possesses both acetoacetyl-ACP synthase and acetyl transacylase activities. Its substrate specificity determines the biosynthesis of branched-chain and/or straight-chain of fatty acids. The sequence is that of Beta-ketoacyl-[acyl-carrier-protein] synthase III from Nitratidesulfovibrio vulgaris (strain DSM 19637 / Miyazaki F) (Desulfovibrio vulgaris).